The primary structure comprises 409 residues: Astacin-like metalloendopeptidase (409 aa).

The first 19 residues, 1–19, serve as a signal peptide directing secretion; sequence MDLKMLLIFTAFLLPAVLG. A propeptide spanning residues 20-86 is cleaved from the precursor; that stretch reads FPIQDNYENS…EGDIVPRRSR (67 aa). The span at 30 to 42 shows a compositional bias: low complexity; sequence TATSESTQVTTEE. Positions 30–55 are disordered; sequence TATSESTQVTTEESIYDSPSPTETDS. A Peptidase M12A domain is found at 87–285; sequence SAFNCRNCYW…AKINKLYNCS (199 aa). 5 disulfide bridges follow: C91-C94, C134-C284, C155-C175, C287-C313, and C339-C362. H183 is a Zn(2+) binding site. E184 is a catalytic residue. H187 and H193 together coordinate Zn(2+). The CUB domain occupies 287-399; sequence CSTIIDAAFG…SGFQATFTSA (113 aa).

Requires Zn(2+) as cofactor.

Its subcellular location is the cytoplasm. The protein resides in the cell membrane. It is found in the cytoplasmic vesicle. The protein localises to the secretory vesicle. It localises to the cortical granule. In terms of biological role, probable oocyte-specific oolemmal receptor involved in sperm and egg adhesion and fertilization. Protease which may play a role in the breaking down of the vitelline membrane (days 0-5) and possibly, in the digestion of the egg white (days 9-12). The polypeptide is Astacin-like metalloendopeptidase (Coturnix japonica (Japanese quail)).